Here is a 252-residue protein sequence, read N- to C-terminus: 5-oxoprolinase subunit A 1 (252 aa).

It belongs to the LamB/PxpA family. In terms of assembly, forms a complex composed of PxpA, PxpB and PxpC.

The enzyme catalyses 5-oxo-L-proline + ATP + 2 H2O = L-glutamate + ADP + phosphate + H(+). Catalyzes the cleavage of 5-oxoproline to form L-glutamate coupled to the hydrolysis of ATP to ADP and inorganic phosphate. This Pseudomonas putida (strain ATCC 47054 / DSM 6125 / CFBP 8728 / NCIMB 11950 / KT2440) protein is 5-oxoprolinase subunit A 1.